Reading from the N-terminus, the 981-residue chain is NAD(+) hydrolase tir-1 (981 aa).

3 disordered regions span residues 1 to 31 (MLPN…RSLK), 74 to 128 (QNEQ…PTQP), and 173 to 225 (LSTP…PVDQ). Polar residues-rich tracts occupy residues 12 to 23 (PSFQSLNNNNQR) and 74 to 85 (QNEQDGETTSTD). The span at 87–97 (AFFELDDDDDL) shows a compositional bias: acidic residues. Over residues 98 to 114 (SSPSVPGSPVDPPSISV) the composition is skewed to low complexity. A compositionally biased stretch (pro residues) spans 115–128 (PLPPKSAPPCPTQP). Positions 182-200 (EEMHNGQVRKESEYRRFKS) are enriched in basic and acidic residues. 2 SAM domains span residues 614 to 678 (WTCA…LKVA) and 684 to 750 (VDES…AKHP). The region spanning 760–857 (KQIDVFISYR…EHQKNIIPIF (98 aa)) is the TIR domain. Residue 769–770 (RR) coordinates NAD(+). The active site involves E842. Polar residues-rich tracts occupy residues 908–939 (TTPT…TGPS), 954–963 (FTPTGSQERA), and 972–981 (PSASTTSDRN). The disordered stretch occupies residues 908–981 (TTPTTKEMPS…PSASTTSDRN (74 aa)).

It belongs to the SARM1 family. Homodimer. Interacts with rab-1, pal-1 and unc-43. As to expression, highly expressed in hypodermis. Localizes to postsynaptic regions of axons.

The protein localises to the cytoplasm. It catalyses the reaction NAD(+) + H2O = ADP-D-ribose + nicotinamide + H(+). Its function is as follows. NAD(+) hydrolase, which plays a key role in non-apoptotic cell death by regulating NAD(+) metabolism. In response to stress, homooligomerizes and catalyzes cleavage of NAD(+) into ADP-D-ribose (ADPR) and nicotinamide; NAD(+) cleavage promoting non-apoptotic neuronal cell death. In males, involved in non-apoptotic death of the linker cell which guides gonad elongation during larval development. Required for both innate immune response and specification of AWC(OFF) neuron. During late embryogenesis, it acts downstream of CAMKII (unc-43) to regulate specification of asymmetric odorant receptors in AWC(OFF) neuron via the nsy-1/ASK1 pmk-1/p38 MAP kinase signaling cascade. Required to localize nsy-1 to postsynaptic regions of AWC neuron, suggesting that it may act by assembling a signaling complex that regulate odorant receptor expression. Also plays a central role in resistance to infection to a broad range of bacterial and fungi pathogens, possibly by activating pmk-1, independently of the NF-kappa-B pathway. Required for expression of antimicrobial peptides nlp-29 and nlp-31. Its role in immune response and neuron specification may be mediated by the same nsy-1/ASK1 pmk-1/p38 MAP kinase cascade signaling pathway. Involved in the response to anoxic conditions probably by activating the p38 pathway composed of nsy-1/sek-1/pmk-1. Involved in regulation of the serotonergic response of ADF neurons to pathogenic food. In addition, plays a role in the up-regulation of gcs-1 upon arsenite treatment, most likely through activation of pmk-1, to confer protection against toxicity induced by heavy metals. Regulates expression of antimicrobial peptide nlp-29 in response to fungal infection or physical injury. This chain is NAD(+) hydrolase tir-1, found in Caenorhabditis elegans.